Consider the following 1489-residue polypeptide: ZEB2-regulated ABC transporter 1 (1489 aa).

Residues 1–55 (MALPEANMSSTRSEQSSRSHDTIVGNEQPHSEKPAASAPGDQMSSDDEDEGPQTE) are disordered. N-linked (GlcNAc...) asparagine glycosylation is present at Asn7. The span at 44-53 (SSDDEDEGPQ) shows a compositional bias: acidic residues. N-linked (GlcNAc...) asparagine glycosylation is found at Asn70, Asn73, Asn118, Asn332, and Asn469. The ABC transporter 1 domain occupies 152–408 (LGLPDMVHQM…FINLGFECPD (257 aa)). A run of 5 helical transmembrane segments spans residues 513-533 (LLGS…VAFI), 552-572 (GATL…EILT), 599-619 (ILVD…TLYF), 628-648 (GAFF…SGVF), and 662-682 (MVPA…VVPV). Asn714 carries an N-linked (GlcNAc...) asparagine glycan. The helical transmembrane segment at 773-793 (GILIAMTIFNHVVYIVATEFI) threads the bilayer. Residues 811-834 (PSKAKSDPEASSSRPIPTTEKNNN) form a disordered region. Residues 819–834 (EASSSRPIPTTEKNNN) are compositionally biased toward polar residues. The ABC transporter 2 domain occupies 846-1088 (FHWNDVCYDI…TLTNYFVKHG (243 aa)). Position 882-889 (882-889 (GVSGAGKT)) interacts with ATP. Helical transmembrane passes span 1190 to 1210 (ALCI…PLSL), 1218 to 1238 (FAIF…MPHF), 1269 to 1289 (IPWN…PVGF), 1307 to 1327 (WLLI…AIAI), and 1333 to 1353 (AGGN…GVLA). A glycan (N-linked (GlcNAc...) asparagine) is linked at Asn1402. A helical membrane pass occupies residues 1457-1477 (GIGMVYIVVNIVGALFLYWLI).

This sequence belongs to the ABC transporter superfamily. ABCG family. PDR (TC 3.A.1.205) subfamily.

The protein resides in the cell membrane. It localises to the vacuole membrane. In terms of biological role, ABC transporter involved in zearalenone production. The polypeptide is ZEB2-regulated ABC transporter 1 (Gibberella zeae (strain ATCC MYA-4620 / CBS 123657 / FGSC 9075 / NRRL 31084 / PH-1) (Wheat head blight fungus)).